The primary structure comprises 573 residues: Membrane protein insertase YidC (573 aa).

Residues 6 to 26 form a helical membrane-spanning segment; the sequence is VFLIFAWLMVAALLWMEWGKD. The tract at residues 63–82 is disordered; sequence PQAGSPAAVPATSTTTATPA. 5 helical membrane passes run 355 to 375, 379 to 399, 446 to 466, 488 to 508, and 524 to 544; these read FSIM…LHSF, WGWA…PLSA, GGCL…WVLV, PYFI…KLTP, and PLVF…YWVV.

It belongs to the OXA1/ALB3/YidC family. Type 1 subfamily. In terms of assembly, interacts with the Sec translocase complex via SecD. Specifically interacts with transmembrane segments of nascent integral membrane proteins during membrane integration.

It localises to the cell inner membrane. Required for the insertion and/or proper folding and/or complex formation of integral membrane proteins into the membrane. Involved in integration of membrane proteins that insert both dependently and independently of the Sec translocase complex, as well as at least some lipoproteins. Aids folding of multispanning membrane proteins. The chain is Membrane protein insertase YidC from Xanthomonas campestris pv. campestris (strain 8004).